We begin with the raw amino-acid sequence, 258 residues long: Cytochrome b-c1 complex subunit Rieske-1, mitochondrial (258 aa).

The N-terminal 46 residues, 1–46 (WPVRSAAPSSSAFISANHFSSDDDSSSPRSISPSLASVFLHHTRGF), are a transit peptide targeting the mitochondrion. The Mitochondrial matrix segment spans residues 47-95 (SSNSVSPAHDMGLVPDLPPTVAAIKNPTSKIVYDEHNHERYPPGDPSKR). A helical transmembrane segment spans residues 96–118 (AFAYFVLTGGRFVYASLMRLLIL). The Mitochondrial intermembrane portion of the chain corresponds to 119 to 258 (KFVLSMSASK…FLEENKLLIG (140 aa)). The Rieske domain occupies 161–256 (RRRTEDDISL…YSFLEENKLL (96 aa)). [2Fe-2S] cluster contacts are provided by Cys201, His203, Cys220, and His223. Cys206 and Cys222 are joined by a disulfide.

The protein belongs to the Rieske iron-sulfur protein family. As to quaternary structure, component of the ubiquinol-cytochrome c oxidoreductase (cytochrome b-c1 complex, complex III, CIII), a multisubunit enzyme composed of 3 respiratory subunits cytochrome b, cytochrome c1 and Rieske protein, 2 core protein subunits, and several low-molecular weight protein subunits. The complex exists as an obligatory dimer and forms supercomplexes (SCs) in the inner mitochondrial membrane with cytochrome c oxidase (complex IV, CIV). Requires [2Fe-2S] cluster as cofactor.

The protein localises to the mitochondrion inner membrane. It carries out the reaction a quinol + 2 Fe(III)-[cytochrome c](out) = a quinone + 2 Fe(II)-[cytochrome c](out) + 2 H(+)(out). Component of the ubiquinol-cytochrome c oxidoreductase, a multisubunit transmembrane complex that is part of the mitochondrial electron transport chain which drives oxidative phosphorylation. The respiratory chain contains 3 multisubunit complexes succinate dehydrogenase (complex II, CII), ubiquinol-cytochrome c oxidoreductase (cytochrome b-c1 complex, complex III, CIII) and cytochrome c oxidase (complex IV, CIV), that cooperate to transfer electrons derived from NADH and succinate to molecular oxygen, creating an electrochemical gradient over the inner membrane that drives transmembrane transport and the ATP synthase. The cytochrome b-c1 complex catalyzes electron transfer from ubiquinol to cytochrome c, linking this redox reaction to translocation of protons across the mitochondrial inner membrane, with protons being carried across the membrane as hydrogens on the quinol. In the process called Q cycle, 2 protons are consumed from the matrix, 4 protons are released into the intermembrane space and 2 electrons are passed to cytochrome c. The Rieske protein is a catalytic core subunit containing a [2Fe-2S] iron-sulfur cluster. It cycles between 2 conformational states during catalysis to transfer electrons from the quinol bound in the Q(0) site in cytochrome b to cytochrome c1. The protein is Cytochrome b-c1 complex subunit Rieske-1, mitochondrial of Nicotiana tabacum (Common tobacco).